A 158-amino-acid chain; its full sequence is NAD(P)H-quinone oxidoreductase subunit J, chloroplastic (158 aa).

The protein belongs to the complex I 30 kDa subunit family. In terms of assembly, NDH is composed of at least 16 different subunits, 5 of which are encoded in the nucleus.

The protein resides in the plastid. It is found in the chloroplast thylakoid membrane. The catalysed reaction is a plastoquinone + NADH + (n+1) H(+)(in) = a plastoquinol + NAD(+) + n H(+)(out). It catalyses the reaction a plastoquinone + NADPH + (n+1) H(+)(in) = a plastoquinol + NADP(+) + n H(+)(out). Functionally, NDH shuttles electrons from NAD(P)H:plastoquinone, via FMN and iron-sulfur (Fe-S) centers, to quinones in the photosynthetic chain and possibly in a chloroplast respiratory chain. The immediate electron acceptor for the enzyme in this species is believed to be plastoquinone. Couples the redox reaction to proton translocation, and thus conserves the redox energy in a proton gradient. The sequence is that of NAD(P)H-quinone oxidoreductase subunit J, chloroplastic from Guizotia abyssinica (Niger).